Consider the following 315-residue polypeptide: Cysteine proteinase 1 (315 aa).

Residues 1-13 form the signal peptide; sequence MFTFILMFYIGYG. The propeptide at 14–93 is activation peptide; it reads IDFNTWVANN…KGEVRYLNIQ (80 aa). 2 disulfide bridges follow: cysteine 115–cysteine 161 and cysteine 152–cysteine 193. Residue cysteine 118 is part of the active site. Residues histidine 259 and asparagine 279 contribute to the active site.

The protein belongs to the peptidase C1 family.

The protein localises to the lysosome. Its activity is regulated as follows. Inhibited by cysteine protease inhibitors ICP1 and ICP2. Its function is as follows. Cysteine protease which degrades matrix proteins such as collagen, laminin and fibronectin and thus is involved in the destruction of human tissue. Can abolish adhesion. May play an important role in pathogenicity. The chain is Cysteine proteinase 1 from Entamoeba histolytica (strain ATCC 30459 / HM-1:IMSS / ABRM).